A 639-amino-acid polypeptide reads, in one-letter code: CTTNBP2 N-terminal-like protein (639 aa).

Positions 87 to 285 form a coiled coil; the sequence is MKQCKNMQER…DLEASHQHSS (199 aa). Residues serine 284 and serine 285 each carry the phosphoserine modification. 3 disordered regions span residues 387–430, 463–490, and 511–609; these read VENG…PCSS, RHKFQSQADQDQQASGLQSPPSRDLSPT, and RFTS…AASL. Low complexity-rich tracts occupy residues 405–430 and 467–477; these read PLSSSGSSLSPSSTASSSLTSSPCSS and QSQADQDQQAS. 7 positions are modified to phosphoserine: serine 481, serine 488, serine 523, serine 527, serine 560, serine 563, and serine 568. Residues 511–529 show a composition bias toward polar residues; it reads RFTSQQGPIKPVSPNSSPF. Phosphothreonine occurs at positions 570 and 590. Positions 587-600 are enriched in low complexity; the sequence is PGLTPSPSATTPLT. Position 592 is a phosphoserine (serine 592).

As to quaternary structure, interacts with CTTN/cortactin; this interaction may redistribute CTTN to stress fibers. May form homomers. Associates with the core of STRIPAK complexes composed of PP2A catalytic and scaffolding subunits, the striatins (PP2A regulatory subunits), the striatin-associated proteins MOB4, STRIP1 and STRIP2, PDCD10 and members of the STE20 kinases, such as STK24 and STK26.

It localises to the cell projection. The protein resides in the lamellipodium. Its subcellular location is the cytoplasm. It is found in the cytoskeleton. The protein localises to the stress fiber. In terms of biological role, regulates lamellipodial actin dynamics in a CTTN-dependent manner. Associates with core striatin-interacting phosphatase and kinase (STRIPAK) complex to form CTTNBP2NL-STRIPAK complexes. STRIPAK complexes have critical roles in protein (de)phosphorylation and are regulators of multiple signaling pathways including Hippo, MAPK, nuclear receptor and cytoskeleton remodeling. Different types of STRIPAK complexes are involved in a variety of biological processes such as cell growth, differentiation, apoptosis, metabolism and immune regulation. The polypeptide is CTTNBP2 N-terminal-like protein (Homo sapiens (Human)).